The chain runs to 141 residues: Cystatin (141 aa).

A signal peptide spans 1–26 (MLHSQLPVAAPLRLLCALLLLPSVTM). Residues 29-129 (GGLSPRSVTD…CRFQVWSRPW (101 aa)) enclose the Cystatin domain. Residues 73–77 (QVVTG) carry the Secondary area of contact motif. 2 disulfide bridges follow: Cys-91/Cys-107 and Cys-120/Cys-140.

Belongs to the cystatin family. Expressed at a low level by the venom gland (at protein level).

The protein localises to the secreted. In terms of biological role, inhibits various C1 cysteine proteases including cathepsin L, papain and cathepsin B. This protein has no toxic activity and its function in the venom is unknown. It may play a role as a housekeeping or regulatory protein. The chain is Cystatin from Hoplocephalus stephensii (Stephens's banded snake).